The sequence spans 962 residues: Glycine dehydrogenase (decarboxylating) (962 aa).

N6-(pyridoxal phosphate)lysine is present on Lys709.

This sequence belongs to the GcvP family. As to quaternary structure, the glycine cleavage system is composed of four proteins: P, T, L and H. Pyridoxal 5'-phosphate is required as a cofactor.

It carries out the reaction N(6)-[(R)-lipoyl]-L-lysyl-[glycine-cleavage complex H protein] + glycine + H(+) = N(6)-[(R)-S(8)-aminomethyldihydrolipoyl]-L-lysyl-[glycine-cleavage complex H protein] + CO2. Its function is as follows. The glycine cleavage system catalyzes the degradation of glycine. The P protein binds the alpha-amino group of glycine through its pyridoxal phosphate cofactor; CO(2) is released and the remaining methylamine moiety is then transferred to the lipoamide cofactor of the H protein. In Shewanella sp. (strain ANA-3), this protein is Glycine dehydrogenase (decarboxylating).